We begin with the raw amino-acid sequence, 330 residues long: Lymphocyte-specific protein 1 (330 aa).

Composition is skewed to basic and acidic residues over residues 1-20 (MAEAAIDPRCEEQEELHAED) and 37-62 (AREQRQRERERQLQDQDKDKEDDGGH). Disordered stretches follow at residues 1–246 (MAEA…SIEL) and 281–302 (DMSKKSLWEQKGGSKISSTIKS). Positions 66–77 (QPGQQTLISLKS) are enriched in polar residues. Phosphoserine; by CK2 is present on residues Ser-77 and Ser-78. Over residues 113–135 (QSERPEEKQTEESSHQAKVHLEE) the composition is skewed to basic and acidic residues. A Phosphothreonine modification is found at Thr-166. Ser-168, Ser-179, Ser-180, and Ser-184 each carry phosphoserine. Composition is skewed to polar residues over residues 206–215 (VKKSQPTLPI) and 223–242 (QQYTQATESSGRTPKLSRQP). Ser-243 bears the Phosphoserine; by MAPKAPK2 mark. Positions 291–302 (KGGSKISSTIKS) are enriched in low complexity. Lys-318 carries the post-translational modification N6-acetyllysine.

In terms of processing, phosphorylated by casein kinase II, protein kinase C and MAPKAPK2. Phosphorylation by PKC induces translocation from membrane to cytoplasm. Phosphorylation by MAPKAPK2 may regulate neutrophil chemotaxis. Isoform 1 is expressed in normal mouse B and T-lymphocytes and in transformed B-cells but not (or in smaller amounts) in nine T-lymphoma lines tested. Isoform 2 is expressed in non-lymphoid cell lines (myocytes, stromal cells, fibroblasts).

It localises to the cell membrane. Its function is as follows. May play a role in mediating neutrophil activation and chemotaxis. The sequence is that of Lymphocyte-specific protein 1 (Lsp1) from Mus musculus (Mouse).